Reading from the N-terminus, the 374-residue chain is MATETFLFTSESVNEGHPDKLCDQISDAVLDACLEQDPESKVACETCTKTNMVMVFGEITTKANVDYEKIVRDTCRNIGFVSDDVGLDADNCKVLVNIEQQSPDIAQGVHGHLTKRPEDIGAGDQGHMFGYATDETPEFMPLSHVLATKLGASLTEVRKNGTCPWLRPDGKTQVTVEYYNDKGAMVPIRVHTVLISTQHDETVTNDEIAADLKEHVIKPVIPEKYLDEKTIFHLNPSGRFRHGGPHGDAGLTGRKIIIDTYGGWGAHGGGAFSGKDPTKVDRSGAYIVREAAKSIVANGLARRCLVQVSYAIGVPEPLSVFVDSYGTGKIPDREILNIVKEAFDFRPGMISISLDLLRGGNGRFFEDSCIWTFW.

Position 11 (Glu11) interacts with Mg(2+). His17 is a binding site for ATP. Glu45 contacts K(+). L-methionine-binding residues include Glu58 and Gln101. ATP is bound by residues 169–171 (DGK), 237–240 (SGRF), Asp248, 254–255 (RK), Ala271, Lys275, and Lys279. Asp248 is a binding site for L-methionine. L-methionine is bound at residue Lys279.

The protein belongs to the AdoMet synthase family. In terms of assembly, homotetramer. Mn(2+) is required as a cofactor. The cofactor is Mg(2+). It depends on Co(2+) as a cofactor. K(+) serves as cofactor. Expressed in vegetative and reproductive tissues.

The protein localises to the cytoplasm. The catalysed reaction is L-methionine + ATP + H2O = S-adenosyl-L-methionine + phosphate + diphosphate. It participates in amino-acid biosynthesis; S-adenosyl-L-methionine biosynthesis; S-adenosyl-L-methionine from L-methionine: step 1/1. In terms of biological role, catalyzes the formation of S-adenosylmethionine from methionine and ATP. The reaction comprises two steps that are both catalyzed by the same enzyme: formation of S-adenosylmethionine (AdoMet) and triphosphate, and subsequent hydrolysis of the triphosphate. This is S-adenosylmethionine synthase 2 (SAMS2) from Pisum sativum (Garden pea).